A 290-amino-acid polypeptide reads, in one-letter code: Pirin (290 aa).

Residues His56, His58, His101, and Glu103 each coordinate Fe cation.

The protein belongs to the pirin family. May interact with NF1/CTF1. Interacts with BCL3. Identified in a complex comprised of PIR, BLC3, NFKB1 and target DNA. Fe cation is required as a cofactor. In terms of tissue distribution, weakly expressed in bone marrow.

The protein localises to the nucleus. The protein resides in the cytoplasm. The enzyme catalyses quercetin + O2 = 2-(3,4-dihydroxybenzoyloxy)-4,6-dihydroxybenzoate + CO. It participates in flavonoid metabolism; quercetin degradation. In terms of biological role, transcriptional coregulator of NF-kappa-B which facilitates binding of NF-kappa-B proteins to target kappa-B genes in a redox-state-dependent manner. May be required for efficient terminal myeloid maturation of hematopoietic cells. Has quercetin 2,3-dioxygenase activity (in vitro). The chain is Pirin (Pir) from Mus musculus (Mouse).